The sequence spans 160 residues: Protein P5 (160 aa).

A helical membrane pass occupies residues 7-23 (FLATAAALGVAMFPTQI).

The protein localises to the virion membrane. The polypeptide is Protein P5 (V) (Pseudoalteromonas espejiana (Bacteriophage PM2)).